Consider the following 991-residue polypeptide: Integrator complex subunit 10-like protein (991 aa).

Disordered regions lie at residues 180-217, 310-345, 462-484, 549-614, and 961-991; these read NNNN…NNNN, YFDE…DIEK, NDYF…SQES, NSSS…GQQP, and EKQY…EMNE. Low complexity predominate over residues 319–333; sequence KQQQQQQQQQQQQEQ. The span at 473 to 484 shows a compositional bias: acidic residues; sequence GGDENDENSQES. Positions 549–609 are enriched in low complexity; sequence NSSSGSNGII…NNNNNNNNNN (61 aa). Polar residues predominate over residues 964-991; sequence YSSSNTANNSGVNNSPIHNQNTDVEMNE.

It localises to the nucleus. In terms of biological role, may be a component of the Integrator complex, a complex involved in the small nuclear RNAs (snRNA) U1 and U2 transcription and in their 3'-box-dependent processing. The protein is Integrator complex subunit 10-like protein of Dictyostelium discoideum (Social amoeba).